The following is a 318-amino-acid chain: Aspartate carbamoyltransferase catalytic subunit (318 aa).

Residues Arg62 and Thr63 each contribute to the carbamoyl phosphate site. Residue Lys90 coordinates L-aspartate. Arg112, His140, and Gln143 together coordinate carbamoyl phosphate. 2 residues coordinate L-aspartate: Arg173 and Arg227. Carbamoyl phosphate is bound by residues Gly268 and Pro269.

This sequence belongs to the aspartate/ornithine carbamoyltransferase superfamily. ATCase family. In terms of assembly, heterododecamer (2C3:3R2) of six catalytic PyrB chains organized as two trimers (C3), and six regulatory PyrI chains organized as three dimers (R2).

The enzyme catalyses carbamoyl phosphate + L-aspartate = N-carbamoyl-L-aspartate + phosphate + H(+). It participates in pyrimidine metabolism; UMP biosynthesis via de novo pathway; (S)-dihydroorotate from bicarbonate: step 2/3. In terms of biological role, catalyzes the condensation of carbamoyl phosphate and aspartate to form carbamoyl aspartate and inorganic phosphate, the committed step in the de novo pyrimidine nucleotide biosynthesis pathway. The protein is Aspartate carbamoyltransferase catalytic subunit of Desulfotalea psychrophila (strain LSv54 / DSM 12343).